The sequence spans 91 residues: Cell division protein FtsB (91 aa).

Over 1-3 (MKW) the chain is Cytoplasmic. A helical transmembrane segment spans residues 4–21 (LVAVLVVFVAMFQYRLWV). The Periplasmic portion of the chain corresponds to 22 to 91 (GEGSIADVVR…ETFFMIIDDQ (70 aa)). Positions 23-63 (EGSIADVVRLEREIARQEADNERLRERNKQLAAEVDALKTG) form a coiled coil.

This sequence belongs to the FtsB family. In terms of assembly, part of a complex composed of FtsB, FtsL and FtsQ.

It is found in the cell inner membrane. Functionally, essential cell division protein. May link together the upstream cell division proteins, which are predominantly cytoplasmic, with the downstream cell division proteins, which are predominantly periplasmic. The sequence is that of Cell division protein FtsB from Teredinibacter turnerae (strain ATCC 39867 / T7901).